An 83-amino-acid chain; its full sequence is Sec-independent protein translocase protein TatA (83 aa).

A helical transmembrane segment spans residues 1-21 (MGSFSIWHWLIVLLIVVMVFG). A disordered region spans residues 44–83 (KDGGQSAAATDDKPAAPAGQVTNAQASDKTTIDVEARQKS). Over residues 63 to 72 (QVTNAQASDK) the composition is skewed to polar residues. Over residues 73 to 83 (TTIDVEARQKS) the composition is skewed to basic and acidic residues.

This sequence belongs to the TatA/E family. As to quaternary structure, the Tat system comprises two distinct complexes: a TatABC complex, containing multiple copies of TatA, TatB and TatC subunits, and a separate TatA complex, containing only TatA subunits. Substrates initially bind to the TatABC complex, which probably triggers association of the separate TatA complex to form the active translocon.

Its subcellular location is the cell inner membrane. Part of the twin-arginine translocation (Tat) system that transports large folded proteins containing a characteristic twin-arginine motif in their signal peptide across membranes. TatA could form the protein-conducting channel of the Tat system. The sequence is that of Sec-independent protein translocase protein TatA from Polaromonas sp. (strain JS666 / ATCC BAA-500).